Reading from the N-terminus, the 165-residue chain is Thiol peroxidase (165 aa).

The region spanning 18-164 (RKVGDKAPNF…YEAAIEAAKK (147 aa)) is the Thioredoxin domain. C60 acts as the Cysteine sulfenic acid (-SOH) intermediate in catalysis. The cysteines at positions 60 and 94 are disulfide-linked.

It belongs to the peroxiredoxin family. Tpx subfamily. Homodimer.

It carries out the reaction a hydroperoxide + [thioredoxin]-dithiol = an alcohol + [thioredoxin]-disulfide + H2O. Functionally, thiol-specific peroxidase that catalyzes the reduction of hydrogen peroxide and organic hydroperoxides to water and alcohols, respectively. Plays a role in cell protection against oxidative stress by detoxifying peroxides. This Listeria monocytogenes serovar 1/2a (strain ATCC BAA-679 / EGD-e) protein is Thiol peroxidase.